Reading from the N-terminus, the 446-residue chain is Ubiquitin carboxyl-terminal hydrolase MINDY-3 (446 aa).

The active-site Nucleophile is cysteine 51. Basic and acidic residues predominate over residues 117–128 (DNSDITDSHPEP). The tract at residues 117–137 (DNSDITDSHPEPESSQPTDTP) is disordered. The active-site Proton acceptor is histidine 288.

The protein belongs to the MINDY deubiquitinase family. FAM188 subfamily.

It is found in the nucleus. The enzyme catalyses Thiol-dependent hydrolysis of ester, thioester, amide, peptide and isopeptide bonds formed by the C-terminal Gly of ubiquitin (a 76-residue protein attached to proteins as an intracellular targeting signal).. Its function is as follows. Hydrolase that can remove 'Lys-48'-linked conjugated ubiquitin from proteins. In Danio rerio (Zebrafish), this protein is Ubiquitin carboxyl-terminal hydrolase MINDY-3 (mindy3).